The chain runs to 110 residues: UPF0060 membrane protein Swit_0423 (110 aa).

Helical transmembrane passes span 6-26 (LFIF…FWAW), 29-49 (LGKS…FAWL), 61-81 (AFAA…WAVE), and 90-110 (LIGV…PRTA).

The protein belongs to the UPF0060 family.

The protein resides in the cell inner membrane. The polypeptide is UPF0060 membrane protein Swit_0423 (Rhizorhabdus wittichii (strain DSM 6014 / CCUG 31198 / JCM 15750 / NBRC 105917 / EY 4224 / RW1) (Sphingomonas wittichii)).